The following is a 691-amino-acid chain: Elongation factor G (691 aa).

Residues Asp-8–Ile-282 enclose the tr-type G domain. Residues Ala-17–Thr-24, Asp-81–His-85, and Asn-135–Asp-138 each bind GTP.

Belongs to the TRAFAC class translation factor GTPase superfamily. Classic translation factor GTPase family. EF-G/EF-2 subfamily.

It localises to the cytoplasm. Its function is as follows. Catalyzes the GTP-dependent ribosomal translocation step during translation elongation. During this step, the ribosome changes from the pre-translocational (PRE) to the post-translocational (POST) state as the newly formed A-site-bound peptidyl-tRNA and P-site-bound deacylated tRNA move to the P and E sites, respectively. Catalyzes the coordinated movement of the two tRNA molecules, the mRNA and conformational changes in the ribosome. This Synechococcus sp. (strain RCC307) protein is Elongation factor G.